The sequence spans 386 residues: Phosphomevalonate dehydratase large subunit (386 aa).

(R)-5-phosphomevalonate is bound by residues G48, V49, S50, N53, R63, N79, and P80. A [4Fe-4S] cluster-binding site is contributed by C110. E129 and S130 together coordinate (R)-5-phosphomevalonate. Positions 283 and 342 each coordinate [4Fe-4S] cluster. K361 contacts (R)-5-phosphomevalonate.

It belongs to the AcnX type II large subunit family. Heterodimer composed of a large subunit (PMDh-L) and a small subunit (PMDh-S). It depends on [4Fe-4S] cluster as a cofactor.

It catalyses the reaction (R)-5-phosphomevalonate = (2E)-3-methyl-5-phosphooxypent-2-enoate + H2O. It participates in isoprenoid biosynthesis; isopentenyl diphosphate biosynthesis via mevalonate pathway. Its function is as follows. Component of a hydro-lyase that catalyzes the dehydration of mevalonate 5-phosphate (MVA5P) to form trans-anhydromevalonate 5-phosphate (tAHMP). Involved in the archaeal mevalonate (MVA) pathway, which provides fundamental precursors for isoprenoid biosynthesis, such as isopentenyl diphosphate (IPP) and dimethylallyl diphosphate (DMAPP). This is Phosphomevalonate dehydratase large subunit from Thermococcus kodakarensis (strain ATCC BAA-918 / JCM 12380 / KOD1) (Pyrococcus kodakaraensis (strain KOD1)).